Reading from the N-terminus, the 255-residue chain is 4-hydroxy-tetrahydrodipicolinate reductase (255 aa).

NAD(+) is bound by residues 8–13, 88–90, and 112–115; these read GSTGRM, ATT, and SSNM. His-144 serves as the catalytic Proton donor/acceptor. Residue His-145 participates in (S)-2,3,4,5-tetrahydrodipicolinate binding. Lys-148 functions as the Proton donor in the catalytic mechanism. 154–155 serves as a coordination point for (S)-2,3,4,5-tetrahydrodipicolinate; it reads GT.

This sequence belongs to the DapB family.

Its subcellular location is the cytoplasm. It catalyses the reaction (S)-2,3,4,5-tetrahydrodipicolinate + NAD(+) + H2O = (2S,4S)-4-hydroxy-2,3,4,5-tetrahydrodipicolinate + NADH + H(+). It carries out the reaction (S)-2,3,4,5-tetrahydrodipicolinate + NADP(+) + H2O = (2S,4S)-4-hydroxy-2,3,4,5-tetrahydrodipicolinate + NADPH + H(+). It participates in amino-acid biosynthesis; L-lysine biosynthesis via DAP pathway; (S)-tetrahydrodipicolinate from L-aspartate: step 4/4. Functionally, catalyzes the conversion of 4-hydroxy-tetrahydrodipicolinate (HTPA) to tetrahydrodipicolinate. The polypeptide is 4-hydroxy-tetrahydrodipicolinate reductase (Sulfurovum sp. (strain NBC37-1)).